We begin with the raw amino-acid sequence, 325 residues long: Putative S-adenosyl-L-methionine-dependent methyltransferase MT0917 (325 aa).

S-adenosyl-L-methionine-binding positions include Asp126 and 155 to 156 (DL).

It belongs to the UPF0677 family.

Exhibits S-adenosyl-L-methionine-dependent methyltransferase activity. The protein is Putative S-adenosyl-L-methionine-dependent methyltransferase MT0917 of Mycobacterium tuberculosis (strain CDC 1551 / Oshkosh).